The chain runs to 246 residues: MKALIIDDEPLARNELTYLLNEIGGFEEINEAENVKETLEALLINQYDIIFLDVNLMDENGIELGAKIQKMKEPPAIIFATAHDQYAVQAFELNATDYILKPFGQKRIEQAVNKVRATKAKDDNSANAIVNDMSANFDQSLPVEIDDKIHMLKQQNIIGIGTHNGITTIHTTNHKYETTEPLNRYEKRLNPTYFIRIHRSYIINTKHIKEVQQWFNYTYMVILTNGVKMQVGRSFMKDFKASIGLL.

The region spanning 2-116 (KALIIDDEPL…RIEQAVNKVR (115 aa)) is the Response regulatory domain. Asp53 carries the 4-aspartylphosphate modification. Residues 141–245 (LPVEIDDKIH…MKDFKASIGL (105 aa)) form the HTH LytTR-type domain.

As to quaternary structure, homodimer; when phosphorylated. Phosphorylated and dephosphorylated by LytS.

It is found in the cytoplasm. Its function is as follows. Member of the two-component regulatory system LytR/LytS that regulates genes involved in autolysis, programmed cell death, biofilm formation and cell wall metabolism. Also participates in sensing and responding to host defense cationic antimicrobial peptides (HDPs). Upon phosphorylation by LytS, functions as a transcription regulator by direct binding to promoter regions of target genes including lrgA and lrgB, to positively regulate their expression. This is Transcriptional regulatory protein LytR (lytR) from Staphylococcus aureus (strain bovine RF122 / ET3-1).